Consider the following 756-residue polypeptide: Catalase-peroxidase (756 aa).

A cross-link (tryptophyl-tyrosyl-methioninium (Trp-Tyr) (with M-270)) is located at residues 91–244 (WHSAGTYRTG…LAAVQMGLIY (154 aa)). Residue H92 is the Proton acceptor of the active site. A disordered region spans residues 198 to 230 (AQKKMQQPGDGTLVAEPENHANEESRTASGERN). The span at 214–223 (PENHANEESR) shows a compositional bias: basic and acidic residues. Positions 244–270 (YVNPEGPEGVPDPVASARDIRETFGRM) form a cross-link, tryptophyl-tyrosyl-methioninium (Tyr-Met) (with W-91). H285 serves as a coordination point for heme b.

This sequence belongs to the peroxidase family. Peroxidase/catalase subfamily. As to quaternary structure, homodimer or homotetramer. The cofactor is heme b. In terms of processing, formation of the three residue Trp-Tyr-Met cross-link is important for the catalase, but not the peroxidase activity of the enzyme.

The enzyme catalyses H2O2 + AH2 = A + 2 H2O. It carries out the reaction 2 H2O2 = O2 + 2 H2O. Bifunctional enzyme with both catalase and broad-spectrum peroxidase activity. This chain is Catalase-peroxidase, found in Pseudomonas syringae pv. syringae (strain B728a).